A 458-amino-acid polypeptide reads, in one-letter code: tRNA(Ile)-lysidine synthase (458 aa).

Residue 36–41 (SGGADS) coordinates ATP.

This sequence belongs to the tRNA(Ile)-lysidine synthase family.

The protein resides in the cytoplasm. It carries out the reaction cytidine(34) in tRNA(Ile2) + L-lysine + ATP = lysidine(34) in tRNA(Ile2) + AMP + diphosphate + H(+). In terms of biological role, ligates lysine onto the cytidine present at position 34 of the AUA codon-specific tRNA(Ile) that contains the anticodon CAU, in an ATP-dependent manner. Cytidine is converted to lysidine, thus changing the amino acid specificity of the tRNA from methionine to isoleucine. The chain is tRNA(Ile)-lysidine synthase from Protochlamydia amoebophila (strain UWE25).